The chain runs to 161 residues: Small ribosomal subunit protein bS6 (161 aa).

The disordered stretch occupies residues 107 to 161 (KGDERERGFRGPKPAGRFESGRGGAGGARRGYDDREEFRARNEREDGRDTDGEAE). A compositionally biased stretch (basic and acidic residues) spans 136 to 161 (RGYDDREEFRARNEREDGRDTDGEAE).

Belongs to the bacterial ribosomal protein bS6 family.

Functionally, binds together with bS18 to 16S ribosomal RNA. In Gluconacetobacter diazotrophicus (strain ATCC 49037 / DSM 5601 / CCUG 37298 / CIP 103539 / LMG 7603 / PAl5), this protein is Small ribosomal subunit protein bS6.